The primary structure comprises 571 residues: UvrABC system protein C (571 aa).

One can recognise a GIY-YIG domain in the interval 15–93; it reads TSPGVYLWKD…VDRFNPEFNI (79 aa). The UVR domain occupies 184-219; that stretch reads NNYLNELTNKMHTAANNMQFELALFLRDGLTYLKKL.

The protein belongs to the UvrC family. In terms of assembly, interacts with UvrB in an incision complex.

It is found in the cytoplasm. Its function is as follows. The UvrABC repair system catalyzes the recognition and processing of DNA lesions. UvrC both incises the 5' and 3' sides of the lesion. The N-terminal half is responsible for the 3' incision and the C-terminal half is responsible for the 5' incision. The chain is UvrABC system protein C from Mycoplasmopsis agalactiae (strain NCTC 10123 / CIP 59.7 / PG2) (Mycoplasma agalactiae).